A 979-amino-acid polypeptide reads, in one-letter code: UPF0182 protein BCG_0095 (979 aa).

The next 7 helical transmembrane spans lie at 19–39 (LVTA…LVDI), 63–83 (LAIV…ALLL), 114–134 (LFGW…ASFD), 174–194 (WLFV…YLFG), 211–231 (VQLA…YWLD), 260–280 (KLVL…AIFL), and 288–308 (MAAA…PLLM). The segment at 898 to 948 (GTGRVATAPGGDAASAPPPGAGGPAPPQAVPPPRTTQPPAAPPRGPDVPPA) is disordered. Over residues 902–912 (VATAPGGDAAS) the composition is skewed to low complexity. Over residues 913–946 (APPPGAGGPAPPQAVPPPRTTQPPAAPPRGPDVP) the composition is skewed to pro residues.

It belongs to the UPF0182 family.

It is found in the cell membrane. This is UPF0182 protein BCG_0095 from Mycobacterium bovis (strain BCG / Pasteur 1173P2).